A 215-amino-acid polypeptide reads, in one-letter code: UPF0502 protein PSEEN2299 (215 aa).

The protein belongs to the UPF0502 family.

The sequence is that of UPF0502 protein PSEEN2299 from Pseudomonas entomophila (strain L48).